The following is a 333-amino-acid chain: PRKC apoptosis WT1 regulator protein (333 aa).

4 stretches are compositionally biased toward low complexity: residues 1–14, 33–51, 66–80, and 105–116; these read MATG…STTT, PAGP…PAGS, GPAG…APGA, and PSAAAASGAPGS. Residues 1 to 262 are disordered; the sequence is MATGGYRSGG…ASFSSSSTLE (262 aa). A B30.2/SPRY domain-binding motif motif is present at residues 62-66; sequence ELNHG. Residues 138 to 154 carry the Nuclear localization signal motif; it reads RKGKGQIEKRKLREKRR. Residues 138–196 form a selective for apoptosis induction in cancer cells (SAC) region; it reads RKGKGQIEKRKLREKRRSTGVVNIPAAECLDEYEDDEAGQKERKREDAITQQNTIQNEA. Position 156 is a phosphothreonine; by PKA (threonine 156). Residues 175-185 are compositionally biased toward basic and acidic residues; it reads AGQKERKREDA. The segment covering 186 to 196 has biased composition (polar residues); sequence ITQQNTIQNEA. Phosphoserine is present on serine 224. The segment covering 235–248 has biased composition (basic and acidic residues); the sequence is PRTDRSGFSRHNRD. Residues 255 to 333 are a coiled coil; the sequence is FSSSSTLEKR…LLKVVGQLTR (79 aa). A leucine-zipper region spans residues 293 to 333; it reads IGKLKEEIDLLNRDLDDMEDENEQLKQENKTLLKVVGQLTR.

In terms of assembly, homooligomer. Interacts (via the C-terminal region) with WT1. Interacts with THAP1. Interacts with AATF. Interacts with BACE1. Interacts with SPSB1 (via B30.2/SPRY domain); this interaction is direct and occurs in association with the Elongin BC complex. Interacts with SPSB2 (via B30.2/SPRY domain); this interaction occurs in association with the Elongin BC complex. Interacts with SPSB4 (via B30.2/SPRY domain); this interaction occurs in association with the Elongin BC complex. Component of a ternary complex composed of SQSTM1 and PRKCZ. Interacts with actin. Post-translationally, preferentially phosphorylated at the Thr-156 by PKC in cancer cells.

It is found in the cytoplasm. The protein localises to the nucleus. Its function is as follows. Pro-apoptotic protein capable of selectively inducing apoptosis in cancer cells, sensitizing the cells to diverse apoptotic stimuli and causing regression of tumors in animal models. Induces apoptosis in certain cancer cells by activation of the Fas prodeath pathway and coparallel inhibition of NF-kappa-B transcriptional activity. Inhibits the transcriptional activation and augments the transcriptional repression mediated by WT1. Down-regulates the anti-apoptotic protein BCL2 via its interaction with WT1. Also seems to be a transcriptional repressor by itself. May be directly involved in regulating the amyloid precursor protein (APP) cleavage activity of BACE1. This Mus musculus (Mouse) protein is PRKC apoptosis WT1 regulator protein (Pawr).